The chain runs to 3664 residues: Msx2-interacting protein (3664 aa).

Residues 1–573 (MVRETRHLWV…YAQAAVKETK (573 aa)) mediate DNA binding. In terms of domain architecture, RRM 1 spans 6–81 (RHLWVGNLPE…RDLRTDYNEP (76 aa)). Positions 70–89 (GDRDLRTDYNEPGTIPSAAR) are disordered. The residue at position 99 (Ser99) is a Phosphoserine. Disordered regions lie at residues 103-164 (EVSG…RTRH), 183-209 (YYAS…REQF), and 225-330 (TREV…EKDE). An Omega-N-methylarginine modification is found at Arg108. The span at 123–164 (HAREGRYERRLDGASDNRERAYEHSAYGHHERGTGGFDRTRH) shows a compositional bias: basic and acidic residues. 2 positions are modified to phosphoserine: Ser188 and Ser190. Composition is skewed to basic and acidic residues over residues 192 to 207 (NRFD…RARE) and 225 to 237 (TREV…ERNY). Residues 245–309 (PHSSQSRNQS…SSSDDSPARS (65 aa)) show a composition bias toward low complexity. A Phosphoserine modification is found at Ser309. 3 consecutive RRM domains span residues 335 to 415 (FGIK…IGPE), 438 to 513 (RTLF…FGKS), and 517 to 589 (NCVW…FANR). Phosphoserine is present on Ser623. Positions 678–723 (REYRDYRNDPYEQDIREYSYRQRERERERERFESDRDRDHERRPIE) are enriched in basic and acidic residues. Disordered stretches follow at residues 678-871 (REYR…AKNR), 918-941 (QVSQ…KVPK), and 957-1020 (RLKA…KKQP). Positions 688 to 715 (YEQDIREYSYRQRERERERERFESDRDR) form a coiled coil. Phosphoserine occurs at positions 725, 727, 736, and 740. A compositionally biased stretch (basic and acidic residues) spans 747–761 (LPSDSERRLYSRSSD). Residues 762–772 (RSGSCSSLSPP) show a composition bias toward low complexity. Ser770 is modified (phosphoserine). Positions 773 to 820 (RYEKLDKSRLERYTKNEKTDKERTFDPERVERERRLIRKEKVEKDKTD) are enriched in basic and acidic residues. Residues Ser830, Ser833, and Ser847 each carry the phosphoserine modification. Basic and acidic residues-rich tracts occupy residues 841-871 (ENER…AKNR), 925-941 (AKSD…KVPK), and 993-1020 (LKAE…KKQP). The stretch at 977-1004 (DLEKLEARKRRFADSNLKAEKQKPEVKK) forms a coiled coil. Ser1062 is modified (phosphoserine). The interval 1070–1287 (ASISVGSGSR…SPRLLSVKGS (218 aa)) is disordered. Residues 1071–1082 (SISVGSGSRPSS) show a composition bias toward low complexity. Over residues 1123 to 1212 (GPEREDVRKN…ERRSLVHEVG (90 aa)) the composition is skewed to basic and acidic residues. Thr1140 bears the Phosphothreonine mark. At Ser1168 the chain carries Phosphoserine. A coiled-coil region spans residues 1170–1191 (RKQMEQSRRKQQMEMEIAKSEK). Residues Ser1194, Ser1222, Ser1252, Ser1261, Ser1268, Ser1278, Ser1283, Ser1287, Ser1333, Ser1380, and Ser1382 each carry the phosphoserine modification. Residues 1231–1257 (DHVDFDICTKRERNYRSSRQISEDSER) show a composition bias toward basic and acidic residues. The disordered stretch occupies residues 1366–1397 (RKRSVRDLEPGEVPSDSDEDGEHKSHSPRASA). Residues 1408–1428 (LRDREDKLRERDERLSSSLER) are a coiled coil. Thr1439 and Thr1441 each carry phosphothreonine. Coiled-coil stretches lie at residues 1496-1529 (KKKK…FASR) and 1592-1612 (RMQQ…KQED). Disordered stretches follow at residues 1497–1524 (KKKI…ERQE), 1588–2171 (MELT…QMEL), 2185–2532 (SASA…TSSS), 2566–2590 (PCLH…APPV), 2775–2806 (QRAS…GAGL), and 2847–2875 (FQQS…QAPA). Basic and acidic residues-rich tracts occupy residues 1501–1524 (RTDS…ERQE) and 1588–1631 (MELT…DSEL). Residues Thr1619 and Thr1633 each carry the phosphothreonine modification. Low complexity predominate over residues 1633-1646 (TPPSVGPPSVTVVT). Over residues 1657–1674 (TTGDKTVEAPLVTEEKTV) the composition is skewed to basic and acidic residues. Low complexity predominate over residues 1686–1695 (ASEPAPAPVE). Residues 1764–1779 (QKSEEANEPKAEKPDA) are compositionally biased toward basic and acidic residues. Residues 1791 to 1802 (AEAAPESQPPAS) show a composition bias toward low complexity. Phosphothreonine is present on Thr1826. 2 stretches are compositionally biased toward basic and acidic residues: residues 1839-1853 (PVTR…EKLK) and 1861-1876 (EAQK…EKIT). Phosphoserine is present on residues Ser1897 and Ser1918. Residues 1912–1925 (GDHENRSPVKEPVE) are compositionally biased toward basic and acidic residues. Residues 1928–1944 (RVTRKRLERELQEAAAV) adopt a coiled-coil conformation. Thr1947 carries the phosphothreonine modification. A compositionally biased stretch (basic residues) spans 1949–1958 (RRGRPPKTRR). Composition is skewed to basic and acidic residues over residues 2000 to 2010 (GKNEPKVDATR), 2026 to 2054 (SSME…DKNP), and 2062 to 2073 (VVEKKPAPEKNS). Phosphoserine is present on residues Ser2101, Ser2120, and Ser2126. Composition is skewed to basic and acidic residues over residues 2122-2132 (EKSESPQKEDG) and 2140-2153 (DPVD…KEDV). The interaction with MSX2 stretch occupies residues 2130–2464 (EDGLSSQLKS…ESDPVTPPSD (335 aa)). At Ser2159 the chain carries Phosphoserine. Thr2163 is subject to Phosphothreonine. Residues 2201 to 2707 (EDRDKPAHQA…NVLTGPVNVL (507 aa)) form the RID domain. Residues 2316–2328 (KGSKEVEVTLVRK) show a composition bias toward basic and acidic residues. Basic residues predominate over residues 2329-2345 (DKGRQKTTRSRRKRNTN). Position 2366 is a phosphoserine (Ser2366). Residues 2380 to 2391 (APQEEKQSEKPH) are compositionally biased toward basic and acidic residues. A Phosphothreonine modification is found at Thr2393. The segment covering 2394–2415 (PPQSCTSDLSKIPSTENSSQEI) has biased composition (polar residues). Phosphothreonine is present on Thr2421. Residues 2429–2438 (PDLPPPPQPA) show a composition bias toward pro residues. Ser2452 and Ser2456 each carry phosphoserine. Pro residues predominate over residues 2459-2471 (VTPPSDPSIPIPT). Thr2460 is modified (phosphothreonine). 3 positions are modified to phosphoserine: Ser2481, Ser2486, and Ser2493. Over residues 2577–2586 (DSKKPLEEKT) the composition is skewed to basic and acidic residues. An interaction with RBPSUH region spans residues 2709 to 2870 (TPVNATVGTV…VTASQPPSKG (162 aa)). Positions 2847-2867 (FQQSVSKSQVKPDSVTASQPP) are enriched in polar residues. A phosphothreonine mark is found at Thr2938 and Thr2950. Disordered regions lie at residues 2978 to 3010 (LGST…IPAD) and 3022 to 3047 (DAHS…STAS). Residues 3032–3047 (GPSSFPRASHPSSTAS) show a composition bias toward low complexity. Asymmetric dimethylarginine is present on residues Arg3113 and Arg3121. 3 disordered regions span residues 3135–3156 (QRAS…QHPP), 3208–3265 (EQPR…APHG), and 3327–3492 (AASS…HLTS). Composition is skewed to pro residues over residues 3244–3262 (TPTP…PAPA) and 3343–3356 (GPPP…PPQP). Composition is skewed to polar residues over residues 3384–3399 (KMPQ…QTGV) and 3417–3436 (TQVQ…SPVS). Residue Ser3433 is modified to Phosphoserine. Residues 3498–3664 (MVQLLKKYPI…PHLMIVIASV (167 aa)) enclose the SPOC domain.

This sequence belongs to the RRM Spen family. As to quaternary structure, interacts with MSX2 and HIPK3. Interacts with NCOR2, HDAC1, HDAC2, RBBP4, MBD3 and MTA1L1. Interacts with RBPSUH; this interaction may prevent the interaction between RBPSUH and NOTCH1. Interacts with the nuclear receptors RAR and PPARD. Interacts with RAR in absence of ligand. Binds to the steroid receptor RNA coactivator SRA. (Microbial infection) Interacts with Epstein-Barr virus BSFL2/BMLF1. In terms of tissue distribution, expressed at high level in brain, testis, spleen and thymus. Expressed at intermediate level in kidney, liver, mammary gland and skin.

The protein resides in the nucleus. Its function is as follows. May serve as a nuclear matrix platform that organizes and integrates transcriptional responses. In osteoblasts, supports transcription activation: synergizes with RUNX2 to enhance FGFR2-mediated activation of the osteocalcin FGF-responsive element (OCFRE). Has also been shown to be an essential corepressor protein, which probably regulates different key pathways such as the Notch pathway. Negative regulator of the Notch pathway via its interaction with RBPSUH, which prevents the association between NOTCH1 and RBPSUH, and therefore suppresses the transactivation activity of Notch signaling. Blocks the differentiation of precursor B-cells into marginal zone B-cells. Probably represses transcription via the recruitment of large complexes containing histone deacetylase proteins. May bind both to DNA and RNA. This is Msx2-interacting protein (SPEN) from Homo sapiens (Human).